A 170-amino-acid chain; its full sequence is Myosin regulatory light chain 2, skeletal muscle isoform type 1 (170 aa).

N,N,N-trimethylalanine is present on Ala-2. 2 positions are modified to phosphoserine: Ser-16 and Ser-17. Thr-26 and Thr-36 each carry phosphothreonine. Residues 26–61 (TQIQEFKEAFTVIDQNRDGIIDKEDLRDTFAAMGRL) form the EF-hand 1 domain. Positions 39, 41, 43, and 50 each coordinate Ca(2+). Ser-76 is modified (phosphoserine). EF-hand domains lie at 96–131 (DPED…QCDR) and 132–167 (FSQE…GDAK). Thr-102 bears the Phosphothreonine mark.

Myosin is a hexamer of 2 heavy chains and 4 light chains.

This is Myosin regulatory light chain 2, skeletal muscle isoform type 1 from Oryctolagus cuniculus (Rabbit).